We begin with the raw amino-acid sequence, 1402 residues long: Defective in tip formation protein A (1402 aa).

Disordered regions lie at residues 1–20, 37–94, 109–133, and 210–292; these read MKDI…PPQI, NVTT…PQIV, NTPS…DNDI, and KQSS…RRLK. A run of 2 repeats spans residues 12–18 and 40–46. Positions 12–92 are 4 X 7 AA repeat of T-T-T-[IV]-[AQ]-P-P; sequence TTTVAPPQIN…TTTTTVQPPQ (81 aa). Over residues 38 to 47 the composition is skewed to low complexity; it reads VTTTTVQPPQ. Over residues 48–58 the composition is skewed to pro residues; the sequence is IVSPPSPPSPP. The span at 59–94 shows a compositional bias: low complexity; the sequence is QTTTIAPPTILPTTKTTTTTTTTTTTTTTVQPPQIV. 2 consecutive repeat copies span residues 60-66 and 86-92. The span at 210 to 234 shows a compositional bias: low complexity; it reads KQSSQSQLQQQLSSQSLQQIQQKSK. Pro residues predominate over residues 235 to 253; sequence QPPPQQQQQQQPPPPPIPL. Positions 254–279 are enriched in low complexity; it reads LPQIHQQLKPKQQQEQQQQQEQQQQQ. The stretch at 350–383 forms a coiled coil; sequence QRIKSFIENHKKKKQKYREYQSEKNQQQKSNSKK. 2 disordered regions span residues 429 to 453 and 712 to 745; these read DQQQ…SPMT and NNNN…NLSN. Positions 430 to 453 are enriched in low complexity; that stretch reads QQQQQQQQQQSTMTTTSSSSSPMT.

It localises to the cell surface. Required for correct organization of the actin cytoskeleton and cytokinesis. Also required for apical sorting of prestalk cells, a prerequisite for formation of the tip at the mound stage and subsequent formation of the fruiting body. May be required for cell adhesion. The sequence is that of Defective in tip formation protein A (dtfA) from Dictyostelium discoideum (Social amoeba).